The primary structure comprises 587 residues: Calcium/calmodulin-dependent protein kinase kinase 2 (587 aa).

Residues 1–11 are compositionally biased toward polar residues; sequence MSSCVSSQPTS. 2 disordered regions span residues 1-32 and 74-115; these read MSSC…SQKP and EADG…SSLD. Position 2 is an N-acetylserine (Ser-2). Phosphoserine occurs at positions 99, 113, 128, 132, and 136. Positions 101–115 are enriched in polar residues; it reads QERSQGGPASSSSLD. The Protein kinase domain occupies 164–445; sequence YTLKDEIGKG…VPEIKLHPWV (282 aa). ATP is bound by residues 170 to 178 and Lys-193; that span reads IGKGSYGVV. The segment at 203 to 225 is RP domain; sequence QAGFPRRPPPRGTRPAPGGCIQP. The interval 204–224 is disordered; sequence AGFPRRPPPRGTRPAPGGCIQ. The Proton acceptor role is filled by Asp-311. The tract at residues 471–476 is autoinhibitory domain; it reads ENSVKH. The segment at 474–499 is calmodulin-binding; sequence VKHIPSLATVILVKTMIRKRSFGNPF. 2 positions are modified to phosphoserine: Ser-494 and Ser-510. Positions 496–587 are disordered; that stretch reads GNPFEGSRRE…QQPEEAMEPE (92 aa). Residues 520-535 show a composition bias toward basic and acidic residues; that stretch reads PTREWEPLSEPKEARQ. A compositionally biased stretch (pro residues) spans 569–579; it reads PGSPPRTPPQQ. Residue Ser-571 is modified to Phosphoserine.

It belongs to the protein kinase superfamily. Ser/Thr protein kinase family. As to quaternary structure, interacts with calmodulin. In terms of processing, phosphorylated by PKA. Each isoform may show a different pattern of phosphorylation. Autophosphorylated. As to expression, mainly expressed in brain, but detected in all tissues tested (at protein level). In the brain, isoform 1 may be predominant. with high levels in the cerebellum and hippocampus, although isoform 3 is detectable. Isoform 3 is also expressed in lung.

Its subcellular location is the nucleus. The protein localises to the cytoplasm. It is found in the cell projection. It localises to the neuron projection. It carries out the reaction L-seryl-[protein] + ATP = O-phospho-L-seryl-[protein] + ADP + H(+). The catalysed reaction is L-threonyl-[protein] + ATP = O-phospho-L-threonyl-[protein] + ADP + H(+). Activated by Ca(2+)/calmodulin. Binding of calmodulin may relieve intrasteric autoinhibition. Autophosphorylation does not alter activity or regulation by Ca(2+)/calmodulin. In part, activity is independent on Ca(2+)/calmodulin. In terms of biological role, calcium/calmodulin-dependent protein kinase belonging to a proposed calcium-triggered signaling cascade involved in a number of cellular processes. Phosphorylates CAMK1 and CAMK4. Phosphorylates CAMK1D. Seems to be involved in hippocampal activation of CREB1. Efficiently phosphorylates 5'-AMP-activated protein kinase (AMPK) trimer, including that consisting of PRKAA1, PRKAB1 and PRKAG1. This phosphorylation is stimulated in response to Ca(2+) signals. May play a role in neurite growth. Isoform 2 may promote neurite elongation, while isoform 1 may promoter neurite branching. This is Calcium/calmodulin-dependent protein kinase kinase 2 (Camkk2) from Rattus norvegicus (Rat).